A 475-amino-acid polypeptide reads, in one-letter code: Ankyrin repeat, SAM and basic leucine zipper domain-containing protein 1 (475 aa).

A disordered region spans residues Met1–Trp25. Phosphoserine occurs at positions 17, 18, and 20. ANK repeat units follow at residues Glu45–Ser74, Tyr78–Phe107, Asp110–Val144, Arg148–Thr177, Asn181–Leu210, and Asp214–Gly243. The SAM domain occupies Ser272 to Gln334.

As to quaternary structure, interacts with DDX4, PIWIL1, RANBP9 and TDRD1.

The protein localises to the cytoplasm. Functionally, plays a central role during spermatogenesis by repressing transposable elements and preventing their mobilization, which is essential for the germline integrity. Acts via the piRNA metabolic process, which mediates the repression of transposable elements during meiosis by forming complexes composed of piRNAs and Piwi proteins and governs the methylation and subsequent repression of transposons. Its association with pi-bodies suggests a participation in the primary piRNAs metabolic process. Required prior to the pachytene stage to facilitate the production of multiple types of piRNAs, including those associated with repeats involved in the regulation of retrotransposons. May act by mediating protein-protein interactions during germ cell maturation. This Chlorocebus aethiops (Green monkey) protein is Ankyrin repeat, SAM and basic leucine zipper domain-containing protein 1 (ASZ1).